The following is a 239-amino-acid chain: Orotidine 5'-phosphate decarboxylase (239 aa).

Substrate contacts are provided by residues D10, K32, 59 to 68 (DLKLHDIPNT), T122, R184, Q193, G213, and R214. The active-site Proton donor is the K61.

Belongs to the OMP decarboxylase family. Type 1 subfamily. Homodimer.

It carries out the reaction orotidine 5'-phosphate + H(+) = UMP + CO2. Its pathway is pyrimidine metabolism; UMP biosynthesis via de novo pathway; UMP from orotate: step 2/2. Functionally, catalyzes the decarboxylation of orotidine 5'-monophosphate (OMP) to uridine 5'-monophosphate (UMP). This chain is Orotidine 5'-phosphate decarboxylase, found in Geobacillus thermodenitrificans (strain NG80-2).